Reading from the N-terminus, the 282-residue chain is Phenylethanolamine N-methyltransferase (282 aa).

S7 is subject to Phosphoserine. S-adenosyl-L-methionine-binding positions include Y35, Y40, 79–80, Y85, D101, N106, 158–159, and A181; these read GS and DV. Residues E219 and D267 each coordinate octopamine.

The enzyme catalyses phenylethanolamine + S-adenosyl-L-methionine = N-methylphenylethanolamine + S-adenosyl-L-homocysteine + H(+). It carries out the reaction (R)-noradrenaline + S-adenosyl-L-methionine = (R)-adrenaline + S-adenosyl-L-homocysteine + H(+). The catalysed reaction is (R)-normetanephrine + S-adenosyl-L-methionine = (R)-metanephrine + S-adenosyl-L-homocysteine + H(+). It catalyses the reaction (R)-octopamine + S-adenosyl-L-methionine = (R)-synephrine + S-adenosyl-L-homocysteine + H(+). Its pathway is catecholamine biosynthesis; (R)-adrenaline biosynthesis; (R)-adrenaline from (R)-noradrenaline: step 1/1. With respect to regulation, inhibited by methyl methanethiosulfonate, phenylglyoxal, tetranitromethane and diethyl pyrocarbonate. Inhibited by 4-oxo-1,4-dihydro-quinoline-3,7-dicarboxylic acid, 4-(benzo[d][1,3]dioxol-5-ylamino)-4-oxobutanoic acid and 1,4-diaminonaphthalene-2,6-disulfonic acid. Catalyzes the transmethylation of nonepinephrine (noradrenaline) to form epinephrine (adrenaline), using S-adenosyl-L-methionine as the methyl donor. Other substrates include phenylethanolamine and octopamine. Also methylates normetanephrine. This chain is Phenylethanolamine N-methyltransferase (PNMT), found in Homo sapiens (Human).